Here is a 251-residue protein sequence, read N- to C-terminus: MRRKIVAGNWKLHGSRAFATELVAKVAAHMPLEGVEVVILPPLPYLGDLIEDFEAHHLSFGAQDVSSNEKGAYTGEVSASMLVDVGAGYGLVGHSERRQYHHESSELVARKFAAAIHAGLIPVLCVGESLEQREAGQTEAILRAQLDPVLALVGSAGFAGAVLAYEPIWAIGTGRTATPEQAQAVHAFLRGEVAKADARIADSLPILYGGSVKPDNAGELFAQPDVDGGLVGGASLVAEDFLAIARAAAAC.

9 to 11 is a substrate binding site; that stretch reads NWK. His94 (electrophile) is an active-site residue. Glu166 acts as the Proton acceptor in catalysis. Residues Gly172, Ser211, and 232-233 each bind substrate; that span reads GG.

Belongs to the triosephosphate isomerase family. As to quaternary structure, homodimer.

The protein localises to the cytoplasm. The catalysed reaction is D-glyceraldehyde 3-phosphate = dihydroxyacetone phosphate. It functions in the pathway carbohydrate biosynthesis; gluconeogenesis. The protein operates within carbohydrate degradation; glycolysis; D-glyceraldehyde 3-phosphate from glycerone phosphate: step 1/1. Functionally, involved in the gluconeogenesis. Catalyzes stereospecifically the conversion of dihydroxyacetone phosphate (DHAP) to D-glyceraldehyde-3-phosphate (G3P). This chain is Triosephosphate isomerase, found in Xanthomonas euvesicatoria pv. vesicatoria (strain 85-10) (Xanthomonas campestris pv. vesicatoria).